The primary structure comprises 386 residues: Myosin light chain kinase family member 4 (386 aa).

The residue at position 100 (serine 100) is a Phosphoserine. The region spanning 107–361 (VSKSEILGGG…ASEALKHPWL (255 aa)) is the Protein kinase domain. ATP is bound by residues 113–121 (LGGGRFGQV) and lysine 136. The Proton acceptor role is filled by aspartate 227.

The protein belongs to the protein kinase superfamily. CAMK Ser/Thr protein kinase family.

The catalysed reaction is L-seryl-[protein] + ATP = O-phospho-L-seryl-[protein] + ADP + H(+). It catalyses the reaction L-threonyl-[protein] + ATP = O-phospho-L-threonyl-[protein] + ADP + H(+). The protein is Myosin light chain kinase family member 4 (Mylk4) of Mus musculus (Mouse).